The sequence spans 428 residues: Histidine--tRNA ligase (428 aa).

Belongs to the class-II aminoacyl-tRNA synthetase family. In terms of assembly, homodimer.

It localises to the cytoplasm. It carries out the reaction tRNA(His) + L-histidine + ATP = L-histidyl-tRNA(His) + AMP + diphosphate + H(+). This Lactobacillus delbrueckii subsp. bulgaricus (strain ATCC 11842 / DSM 20081 / BCRC 10696 / JCM 1002 / NBRC 13953 / NCIMB 11778 / NCTC 12712 / WDCM 00102 / Lb 14) protein is Histidine--tRNA ligase.